The sequence spans 323 residues: Peroxisome biogenesis protein 20 (323 aa).

Residue Cys8 forms a Glycyl cysteine thioester (Cys-Gly) (interchain with G-Cter in ubiquitin) linkage. A Glycyl lysine isopeptide (Lys-Gly) (interchain with G-Cter in ubiquitin) cross-link involves residue Lys19. 3 consecutive short sequence motifs (wxxxF/Y motif) follow at residues 89-93 (WSSEF), 102-105 (WVED), and 141-145 (WTQEF).

The protein belongs to the peroxisomal targeting signal receptor family. Interacts (via WxxxF/Y and LVxEF motifs) with PEX14; promoting translocation through the PEX13-PEX14 docking complex. Interacts with PEX7. Monoubiquitinated at Cys-8 by PEX2 during PEX20 passage through the PEX2-PEX10-PEX12 retrotranslocation channel: monoubiquitination acts as a signal for PEX20 extraction and is required for proper export from peroxisomes and recycling. When PEX5 recycling is compromised, polyubiquitinated at Lys-19 by PEX10 during its passage through the retrotranslocation channel, leading to its degradation.

The protein localises to the cytoplasm. It is found in the cytosol. It localises to the peroxisome matrix. Its function is as follows. Coreceptor required for the peroxisomal import of proteins containing a C-terminal PTS2-type peroxisomal targeting signal, such as 3-oxoacyl-CoA thiolase. Acts via its interaction with PEX7, promoting association between PEX7 bound to cargo proteins and the PEX13-PEX14 docking complex. PEX20 along with PEX7 and PTS2-containing cargo proteins are tranlocated into peroxisomes by passing through the PEX13-PEX14 docking complex. PEX20 coreceptor is then retrotranslocated into the cytosol, leading to release of bound cargo in the peroxisome matrix, and reset for a subsequent peroxisome import cycle. Also mediates peroxisomal import of proteins that do not contain PTS1- or PTS2-type peroxisomal targeting signals, such as acyl-CoA oxidases (Aox) izozymes. Import of acyl-CoA oxidases (Aox) izozymes is independent of PEX7. Required for PEX7 ubiquitination. The sequence is that of Peroxisome biogenesis protein 20 from Komagataella pastoris (Yeast).